The sequence spans 303 residues: Coenzyme PQQ synthesis protein B (303 aa).

The protein belongs to the PqqB family.

The protein operates within cofactor biosynthesis; pyrroloquinoline quinone biosynthesis. Its function is as follows. May be involved in the transport of PQQ or its precursor to the periplasm. In Pseudomonas entomophila (strain L48), this protein is Coenzyme PQQ synthesis protein B.